Consider the following 141-residue polypeptide: Meiotically up-regulated gene 118 protein (141 aa).

Residues 106 to 115 (LSSQKSARQP) are compositionally biased toward polar residues. A disordered region spans residues 106–141 (LSSQKSARQPTKTVASSSSSSSKSTTVSKSSSKSQV). Positions 116-141 (TKTVASSSSSSSKSTTVSKSSSKSQV) are enriched in low complexity.

Its subcellular location is the nucleus. In terms of biological role, has a role in meiosis. The polypeptide is Meiotically up-regulated gene 118 protein (mug118) (Schizosaccharomyces pombe (strain 972 / ATCC 24843) (Fission yeast)).